The following is a 487-amino-acid chain: N-succinylglutamate 5-semialdehyde dehydrogenase (487 aa).

Residue 221–226 participates in NAD(+) binding; sequence GSSDTG. Active-site residues include glutamate 244 and cysteine 278.

The protein belongs to the aldehyde dehydrogenase family. AstD subfamily.

The catalysed reaction is N-succinyl-L-glutamate 5-semialdehyde + NAD(+) + H2O = N-succinyl-L-glutamate + NADH + 2 H(+). The protein operates within amino-acid degradation; L-arginine degradation via AST pathway; L-glutamate and succinate from L-arginine: step 4/5. Catalyzes the NAD-dependent reduction of succinylglutamate semialdehyde into succinylglutamate. This chain is N-succinylglutamate 5-semialdehyde dehydrogenase, found in Burkholderia ambifaria (strain MC40-6).